Consider the following 325-residue polypeptide: Lipoyl synthase (325 aa).

The disordered stretch occupies residues 1–31 (MASDSDLLDTKPAETRHPEKAHRPDQPTLRK). The span at 8–31 (LDTKPAETRHPEKAHRPDQPTLRK) shows a compositional bias: basic and acidic residues. [4Fe-4S] cluster is bound by residues Cys-61, Cys-66, Cys-72, Cys-87, Cys-91, Cys-94, and Ser-300. The 217-residue stretch at 73-289 (WAKKHATFMI…AEIGRAKGFL (217 aa)) folds into the Radical SAM core domain.

It belongs to the radical SAM superfamily. Lipoyl synthase family. It depends on [4Fe-4S] cluster as a cofactor.

Its subcellular location is the cytoplasm. It carries out the reaction [[Fe-S] cluster scaffold protein carrying a second [4Fe-4S](2+) cluster] + N(6)-octanoyl-L-lysyl-[protein] + 2 oxidized [2Fe-2S]-[ferredoxin] + 2 S-adenosyl-L-methionine + 4 H(+) = [[Fe-S] cluster scaffold protein] + N(6)-[(R)-dihydrolipoyl]-L-lysyl-[protein] + 4 Fe(3+) + 2 hydrogen sulfide + 2 5'-deoxyadenosine + 2 L-methionine + 2 reduced [2Fe-2S]-[ferredoxin]. The protein operates within protein modification; protein lipoylation via endogenous pathway; protein N(6)-(lipoyl)lysine from octanoyl-[acyl-carrier-protein]: step 2/2. In terms of biological role, catalyzes the radical-mediated insertion of two sulfur atoms into the C-6 and C-8 positions of the octanoyl moiety bound to the lipoyl domains of lipoate-dependent enzymes, thereby converting the octanoylated domains into lipoylated derivatives. The chain is Lipoyl synthase from Methylocella silvestris (strain DSM 15510 / CIP 108128 / LMG 27833 / NCIMB 13906 / BL2).